A 410-amino-acid polypeptide reads, in one-letter code: MADAPKEGRLTRFLDFTQLTDMASESVGGKILFATDDFFAPAENLIKSDSPCFKEREYTEFGKWMDGWETRRKRIPGHDWCVLRLGIQGVIRAFDVDVSYFTGDYAPRMSIQAANLEEEKLPEIPERGIRTGAAATPEEFEAIAELKSDDWSYLVPMTELKPGNPASGHNYFLVNSQQRWTHIRLNIFPDGGIARLRVLGTGQKDWTATDPKEHADLVAIAFGGVCVGFSSAKFGHPNNIIGVGGAKSMADGWETARRLDRPPILENDDNGILLVPGCEWAVFRLAHPGVITRIEIDTKYFKGNAPDSCKVDGCVLTTQEEEDMIKQKWILPAHKWKPLLPVTKLSPNQSHLFDSLTLELQDVITHARLTIVPDGGVSRLRLRGFPSSICLLRPREKPMMKFSVGFKANP.

Belongs to the allantoicase family.

In terms of biological role, the function of this enzyme is unclear as allantoicase activity is not known to exist in mammals. The sequence is that of Probable inactive allantoicase (ALLC) from Macaca fascicularis (Crab-eating macaque).